We begin with the raw amino-acid sequence, 113 residues long: Inner membrane protein YiaB (113 aa).

Over M1–K9 the chain is Cytoplasmic. The helical transmembrane segment at L10 to L20 threads the bilayer. The Periplasmic portion of the chain corresponds to V21 to K33. The chain crosses the membrane as a helical span at residues G34–L51. The Cytoplasmic segment spans residues R52–D61. A helical membrane pass occupies residues F62–V82. The Periplasmic segment spans residues L83–N84. Residues A85–G105 traverse the membrane as a helical segment. Residues Q106–A113 are Cytoplasmic-facing.

The protein resides in the cell inner membrane. This chain is Inner membrane protein YiaB (yiaB), found in Escherichia coli (strain K12).